The chain runs to 329 residues: Beta-ketoacyl-[acyl-carrier-protein] synthase III (329 aa).

Residues Cys123 and His256 contribute to the active site. Residues 257-261 form an ACP-binding region; it reads QANIR. Residue Asn286 is part of the active site.

This sequence belongs to the thiolase-like superfamily. FabH family. In terms of assembly, homodimer.

It localises to the cytoplasm. It carries out the reaction malonyl-[ACP] + acetyl-CoA + H(+) = 3-oxobutanoyl-[ACP] + CO2 + CoA. The protein operates within lipid metabolism; fatty acid biosynthesis. Catalyzes the condensation reaction of fatty acid synthesis by the addition to an acyl acceptor of two carbons from malonyl-ACP. Catalyzes the first condensation reaction which initiates fatty acid synthesis and may therefore play a role in governing the total rate of fatty acid production. Possesses both acetoacetyl-ACP synthase and acetyl transacylase activities. Its substrate specificity determines the biosynthesis of branched-chain and/or straight-chain of fatty acids. The chain is Beta-ketoacyl-[acyl-carrier-protein] synthase III from Paraburkholderia phymatum (strain DSM 17167 / CIP 108236 / LMG 21445 / STM815) (Burkholderia phymatum).